Consider the following 278-residue polypeptide: Transmembrane protein 41B (278 aa).

Residues 1–31 (MQVHERSHTGGHTCQCNHGSEKKAPATGKVH) are disordered. 6 helical membrane passes run 39-59 (MSLL…FLVY), 96-116 (FYVE…TFAI), 132-154 (FPLA…YLLS), 184-204 (LINY…FINI), 212-232 (PLKV…FVAI), and 249-269 (SWNS…PAIF). Positions 127 to 238 (GFLYPFPLAL…FVAIKAGTTL (112 aa)) are VTT domain; required for its function in autophagy.

It belongs to the TMEM41 family.

Its subcellular location is the endoplasmic reticulum membrane. It localises to the endomembrane system. It catalyses the reaction a 1,2-diacyl-sn-glycero-3-phospho-L-serine(in) = a 1,2-diacyl-sn-glycero-3-phospho-L-serine(out). The enzyme catalyses cholesterol(in) = cholesterol(out). The catalysed reaction is a 1,2-diacyl-sn-glycero-3-phosphocholine(in) = a 1,2-diacyl-sn-glycero-3-phosphocholine(out). It carries out the reaction a 1,2-diacyl-sn-glycero-3-phosphoethanolamine(in) = a 1,2-diacyl-sn-glycero-3-phosphoethanolamine(out). Phospholipid scramblase involved in lipid homeostasis and membrane dynamics processes. Has phospholipid scramblase activity toward cholesterol and phosphatidylserine, as well as phosphatidylethanolamine and phosphatidylcholine. Required for autophagosome formation: participates in early stages of autophagosome biogenesis at the endoplasmic reticulum (ER) membrane by reequilibrating the leaflets of the ER as lipids are extracted by atg2 (atg2a or atg2b) to mediate autophagosome assembly. In addition to autophagy, involved in other processes in which phospholipid scramblase activity is required. Required for normal motor neuron development. This is Transmembrane protein 41B from Xenopus tropicalis (Western clawed frog).